The following is a 188-amino-acid chain: ATP synthase subunit delta (188 aa).

This sequence belongs to the ATPase delta chain family. F-type ATPases have 2 components, F(1) - the catalytic core - and F(0) - the membrane proton channel. F(1) has five subunits: alpha(3), beta(3), gamma(1), delta(1), epsilon(1). F(0) has three main subunits: a(1), b(2) and c(10-14). The alpha and beta chains form an alternating ring which encloses part of the gamma chain. F(1) is attached to F(0) by a central stalk formed by the gamma and epsilon chains, while a peripheral stalk is formed by the delta and b chains.

It localises to the cell inner membrane. Functionally, f(1)F(0) ATP synthase produces ATP from ADP in the presence of a proton or sodium gradient. F-type ATPases consist of two structural domains, F(1) containing the extramembraneous catalytic core and F(0) containing the membrane proton channel, linked together by a central stalk and a peripheral stalk. During catalysis, ATP synthesis in the catalytic domain of F(1) is coupled via a rotary mechanism of the central stalk subunits to proton translocation. Its function is as follows. This protein is part of the stalk that links CF(0) to CF(1). It either transmits conformational changes from CF(0) to CF(1) or is implicated in proton conduction. This Rhizobium johnstonii (strain DSM 114642 / LMG 32736 / 3841) (Rhizobium leguminosarum bv. viciae) protein is ATP synthase subunit delta.